Consider the following 182-residue polypeptide: Sperm acrosome-associated protein 7 (182 aa).

An N-terminal signal peptide occupies residues 1–24; it reads MAANRGSRTFLSVFLLCCWQGAEL. Residue N40 is glycosylated (N-linked (GlcNAc...) asparagine). The span at 112 to 140 shows a compositional bias: basic and acidic residues; that stretch reads LPTKEESGKNDRSTVANLHDHSSQTKHEP. A disordered region spans residues 112 to 154; that stretch reads LPTKEESGKNDRSTVANLHDHSSQTKHEPPSSPEGKGSSNDDV.

Testis-specific. Expressed in zygotene and pachytene spermatocytes, round spermatids, elongating spermatids and spermatozoa (at protein level). Testis-specific.

It is found in the secreted. The protein localises to the cytoplasmic vesicle. Its subcellular location is the secretory vesicle. The protein resides in the acrosome lumen. Functionally, involved in fertilization. Seems not to play a direct role in sperm-egg binding or gamete fusion. The sequence is that of Sperm acrosome-associated protein 7 from Mus musculus (Mouse).